We begin with the raw amino-acid sequence, 285 residues long: Ribose-phosphate pyrophosphokinase (285 aa).

ATP contacts are provided by residues 33–35 (DGE) and 91–92 (RQ). Positions 125 and 162 each coordinate Mg(2+). Residue Lys-185 is part of the active site. D-ribose 5-phosphate contacts are provided by residues Arg-187, Asp-211, and 215-219 (STGGT).

It belongs to the ribose-phosphate pyrophosphokinase family. Class III (archaeal) subfamily. Mg(2+) serves as cofactor.

Its subcellular location is the cytoplasm. It catalyses the reaction D-ribose 5-phosphate + ATP = 5-phospho-alpha-D-ribose 1-diphosphate + AMP + H(+). Its pathway is metabolic intermediate biosynthesis; 5-phospho-alpha-D-ribose 1-diphosphate biosynthesis; 5-phospho-alpha-D-ribose 1-diphosphate from D-ribose 5-phosphate (route I): step 1/1. In terms of biological role, involved in the biosynthesis of the central metabolite phospho-alpha-D-ribosyl-1-pyrophosphate (PRPP) via the transfer of pyrophosphoryl group from ATP to 1-hydroxyl of ribose-5-phosphate (Rib-5-P). This Methanothermobacter thermautotrophicus (strain ATCC 29096 / DSM 1053 / JCM 10044 / NBRC 100330 / Delta H) (Methanobacterium thermoautotrophicum) protein is Ribose-phosphate pyrophosphokinase.